Consider the following 351-residue polypeptide: Selenide, water dikinase (351 aa).

Residue selenocysteine 15 is part of the active site. Position 15 (selenocysteine 15) is a non-standard amino acid, selenocysteine. Residues lysine 18 and aspartate 47–glutamate 49 each bind ATP. Aspartate 50 contributes to the Mg(2+) binding site. ATP is bound by residues aspartate 67, aspartate 90, and glycine 138–serine 140. Residue aspartate 90 participates in Mg(2+) binding. Position 227 (aspartate 227) interacts with Mg(2+).

Belongs to the selenophosphate synthase 1 family. Class I subfamily. Homodimer. Requires Mg(2+) as cofactor.

It catalyses the reaction hydrogenselenide + ATP + H2O = selenophosphate + AMP + phosphate + 2 H(+). Synthesizes selenophosphate from selenide and ATP. The polypeptide is Selenide, water dikinase (Nitratidesulfovibrio vulgaris (strain ATCC 29579 / DSM 644 / CCUG 34227 / NCIMB 8303 / VKM B-1760 / Hildenborough) (Desulfovibrio vulgaris)).